Consider the following 345-residue polypeptide: S-adenosylmethionine:tRNA ribosyltransferase-isomerase (345 aa).

It belongs to the QueA family. As to quaternary structure, monomer.

It is found in the cytoplasm. It carries out the reaction 7-aminomethyl-7-carbaguanosine(34) in tRNA + S-adenosyl-L-methionine = epoxyqueuosine(34) in tRNA + adenine + L-methionine + 2 H(+). Its pathway is tRNA modification; tRNA-queuosine biosynthesis. Functionally, transfers and isomerizes the ribose moiety from AdoMet to the 7-aminomethyl group of 7-deazaguanine (preQ1-tRNA) to give epoxyqueuosine (oQ-tRNA). This Shewanella halifaxensis (strain HAW-EB4) protein is S-adenosylmethionine:tRNA ribosyltransferase-isomerase.